Consider the following 601-residue polypeptide: ATP-dependent RNA helicase DeaD (601 aa).

The Q motif motif lies at 6–34; it reads STFSFLGLNPFIIQSLNEMGYVKPSPIQA. In terms of domain architecture, Helicase ATP-binding spans 37–208; it reads IPLLLEGRDV…KRFMRNPKEI (172 aa). 50-57 provides a ligand contact to ATP; that stretch reads AQTGSGKT. A DEAD box motif is present at residues 156-159; sequence DEAD. The 148-residue stretch at 231-378 folds into the Helicase C-terminal domain; sequence KTDALIRFLE…EVQLPKVELL (148 aa). Residues 552–576 show a composition bias toward basic and acidic residues; that stretch reads SRHYENKTTHRSIFNKDKNSNRRVS. The interval 552–601 is disordered; that stretch reads SRHYENKTTHRSIFNKDKNSNRRVSDGSFNKSNSPKKTEFKSSFFRRRNV.

Belongs to the DEAD box helicase family. DeaD/CsdA subfamily.

It localises to the cytoplasm. The catalysed reaction is ATP + H2O = ADP + phosphate + H(+). Its function is as follows. DEAD-box RNA helicase involved in various cellular processes at low temperature, including ribosome biogenesis, mRNA degradation and translation initiation. The polypeptide is ATP-dependent RNA helicase DeaD (Buchnera aphidicola subsp. Acyrthosiphon pisum (strain APS) (Acyrthosiphon pisum symbiotic bacterium)).